The sequence spans 307 residues: Aspartate carbamoyltransferase catalytic subunit (307 aa).

Residues R54 and T55 each contribute to the carbamoyl phosphate site. Position 83 (K83) interacts with L-aspartate. Residues R104, H132, and Q135 each contribute to the carbamoyl phosphate site. L-aspartate is bound by residues R165 and R228. Carbamoyl phosphate-binding residues include L267 and P268.

The protein belongs to the aspartate/ornithine carbamoyltransferase superfamily. ATCase family. In terms of assembly, heterododecamer (2C3:3R2) of six catalytic PyrB chains organized as two trimers (C3), and six regulatory PyrI chains organized as three dimers (R2).

It carries out the reaction carbamoyl phosphate + L-aspartate = N-carbamoyl-L-aspartate + phosphate + H(+). Its pathway is pyrimidine metabolism; UMP biosynthesis via de novo pathway; (S)-dihydroorotate from bicarbonate: step 2/3. Its function is as follows. Catalyzes the condensation of carbamoyl phosphate and aspartate to form carbamoyl aspartate and inorganic phosphate, the committed step in the de novo pyrimidine nucleotide biosynthesis pathway. The protein is Aspartate carbamoyltransferase catalytic subunit of Clostridium botulinum (strain Loch Maree / Type A3).